Here is a 262-residue protein sequence, read N- to C-terminus: Protein BREAKING OF ASYMMETRY IN THE STOMATAL LINEAGE (262 aa).

Disordered regions lie at residues 32-107 (DEDG…QPPV) and 129-222 (KEGK…GRGS). Residues 37 to 47 (NNNGNTTNNNN) show a composition bias toward low complexity. 2 consecutive short sequence motifs (nuclear localization signal) follow at residues 50-57 (FKRIKRKI) and 61-68 (KKKRSERK). Basic residues predominate over residues 51-66 (KRIKRKIKSTKKKRSE). Serine 72, serine 85, serine 86, and serine 87 each carry phosphoserine; by ASK7. Residues 84-95 (RSSSVSPTTSGS) are compositionally biased toward low complexity. At serine 89 the chain carries Phosphoserine; by ASK7 and MPK6. Threonine 91 is subject to Phosphothreonine; by ASK7. The segment covering 129–146 (KEGKQEKKETESSSEKSP) has biased composition (basic and acidic residues). Phosphoserine; by MPK6 is present on residues serine 145 and serine 168. The span at 179–189 (NDNTSCQGTKD) shows a compositional bias: polar residues. The span at 190-200 (VSSDVTERTKE) shows a compositional bias: basic and acidic residues. The interval 222-262 (SFAFPILGVEWMGSPAKMPESDDLSPKKQKPVALGFQCCRF) is required for polarization at the cell cortex. The short motif at 223–226 (FAFP) is the FxFP, required for cortical polarity formation element. Residues serine 235 and serine 246 each carry the phosphoserine; by MPK6 modification.

Component of a complex made of POLAR, BASL, ASK7/BIN2 and ASK3/SK12. Interacts with POLAR, ASK7/BIN2 and ASK3/SK12. Binds to YDA when phosphorylated. Interacts with MPK6, MPK3 and MKK5. Cortical localization of BASL requires phosphorylation mediated by MPK3 and MPK6. Phosphorylation promotes YDA binding. Phosphorylation status modulates subcellular mobility. In terms of tissue distribution, mostly expressed in stomatal lineage cells including asymmetrically dividing meristemoid mother cells (MMCs) and meristemoids, and, at lower levels, in their sisters. Also present in vasculature. Expressed at low levels in the epidermal pavement cells.

It localises to the cytoplasm. Its subcellular location is the nucleus. The protein resides in the cell cortex. It is found in the cell membrane. Regulates asymmetric cell division (ACD), especially in stomatal-lineage cells, probably by modulating accumulation and subcellular polarization of POLAR and SPCH. Mediates an attenuation of MAPK signaling upon polarization of POLAR and ASK7/BIN2 in stomatal lineage ground cells (SLGCs) undergoing ACD, and relieves BIN2 inhibition of SPCH in the nucleus. When phosphorylated, functions as a scaffold and recruits the MAPKKK YODA, MPK3 and MPK6 to spatially reorganize the MAPK signaling pathway at the cortex of cells undergoing ACD. Cortical polarization leads to elevated nuclear MPK6 signaling and lowered SPCH abundance in one of the two daughter cells, thus differentiating the two daughter cells after ACD. The chain is Protein BREAKING OF ASYMMETRY IN THE STOMATAL LINEAGE from Arabidopsis thaliana (Mouse-ear cress).